Here is a 123-residue protein sequence, read N- to C-terminus: Chondroitin proteoglycan 8 (123 aa).

A signal peptide spans 1 to 16 (MRPFILLALLFSVAIA). The tract at residues 32–123 (SVRRSTRGAD…SGSGDEAPAE (92 aa)) is disordered. Residues 38–60 (RGADKKADSSDSSDSNEKDDKVT) are compositionally biased toward basic and acidic residues. Residues serine 63 and serine 65 are each glycosylated (O-linked (Xyl...) (chondroitin sulfate) serine). Positions 74–84 (EQLRRVARDVE) are enriched in basic and acidic residues. 3 O-linked (Xyl...) (chondroitin sulfate) serine glycosylation sites follow: serine 87, serine 93, and serine 114.

This chain is Chondroitin proteoglycan 8 (cpg-8), found in Caenorhabditis briggsae.